The following is a 408-amino-acid chain: Protein SPATA31F3 (408 aa).

The chain crosses the membrane as a helical span at residues 11–31; that stretch reads VGYPFYTYGSIIIIALIIWQV. The segment at 51 to 71 is disordered; it reads QKVKQRAKEKTPRARRHSRKE. At S152 the chain carries Phosphoserine. 2 disordered regions span residues 297–316 and 351–408; these read TKTK…MKGA and LPLS…SASS. Residues 351-392 show a composition bias toward polar residues; the sequence is LPLSSGSSKRSPLLTCATQPENPSHVSVSTSAEGTCLPQEST.

The protein belongs to the SPATA31 family.

It is found in the membrane. In Bos taurus (Bovine), this protein is Protein SPATA31F3 (SPATA31F3).